Consider the following 169-residue polypeptide: MAQMVAMPVAHSLSLICNWAKSNPLSRNTLALPASNTPNKQSLSIRCARVGGVEIPANKRIEYSLQYIHGIGRTRARQILVDLQMENKITKDMAEEELIILRDEVSKYMIEGDLRRFNALAIKRLKEIQCYRGVRHIQGLPCRGQRTKNNCRTLKGKKIAIAGKKKVSK.

A chloroplast-targeting transit peptide spans 1–47 (MAQMVAMPVAHSLSLICNWAKSNPLSRNTLALPASNTPNKQSLSIRC).

It belongs to the universal ribosomal protein uS13 family. Part of the 30S ribosomal subunit.

The protein resides in the plastid. The protein localises to the chloroplast. Located at the top of the head of the 30S subunit, it contacts several helices of the 16S rRNA. The polypeptide is Small ribosomal subunit protein uS13c (RPS13) (Arabidopsis thaliana (Mouse-ear cress)).